The primary structure comprises 329 residues: 4-hydroxythreonine-4-phosphate dehydrogenase (329 aa).

Positions 136 and 137 each coordinate substrate. A divalent metal cation-binding residues include H166, H211, and H266. Residues K274, N283, and R292 each coordinate substrate.

It belongs to the PdxA family. In terms of assembly, homodimer. Zn(2+) serves as cofactor. It depends on Mg(2+) as a cofactor. Co(2+) is required as a cofactor.

It is found in the cytoplasm. The catalysed reaction is 4-(phosphooxy)-L-threonine + NAD(+) = 3-amino-2-oxopropyl phosphate + CO2 + NADH. It participates in cofactor biosynthesis; pyridoxine 5'-phosphate biosynthesis; pyridoxine 5'-phosphate from D-erythrose 4-phosphate: step 4/5. Catalyzes the NAD(P)-dependent oxidation of 4-(phosphooxy)-L-threonine (HTP) into 2-amino-3-oxo-4-(phosphooxy)butyric acid which spontaneously decarboxylates to form 3-amino-2-oxopropyl phosphate (AHAP). This chain is 4-hydroxythreonine-4-phosphate dehydrogenase, found in Shigella sonnei (strain Ss046).